The primary structure comprises 195 residues: Shikimate kinase (195 aa).

Residue 26 to 31 (GSGKST) coordinates ATP. Residue S30 participates in Mg(2+) binding. Positions 48, 72, and 94 each coordinate substrate. R132 contacts ATP. R151 provides a ligand contact to substrate.

It belongs to the shikimate kinase family. In terms of assembly, monomer. Mg(2+) serves as cofactor.

The protein resides in the cytoplasm. It catalyses the reaction shikimate + ATP = 3-phosphoshikimate + ADP + H(+). It participates in metabolic intermediate biosynthesis; chorismate biosynthesis; chorismate from D-erythrose 4-phosphate and phosphoenolpyruvate: step 5/7. Catalyzes the specific phosphorylation of the 3-hydroxyl group of shikimic acid using ATP as a cosubstrate. The polypeptide is Shikimate kinase (Synechococcus sp. (strain RCC307)).